The chain runs to 432 residues: D-amino acid dehydrogenase (432 aa).

An FAD-binding site is contributed by Val3 to Trp17.

It belongs to the DadA oxidoreductase family. FAD is required as a cofactor.

The enzyme catalyses a D-alpha-amino acid + A + H2O = a 2-oxocarboxylate + AH2 + NH4(+). It functions in the pathway amino-acid degradation; D-alanine degradation; NH(3) and pyruvate from D-alanine: step 1/1. In terms of biological role, oxidative deamination of D-amino acids. This chain is D-amino acid dehydrogenase, found in Salmonella arizonae (strain ATCC BAA-731 / CDC346-86 / RSK2980).